The following is a 288-amino-acid chain: Killer cell lectin-like receptor 2 (288 aa).

At 1–45 the chain is on the cytoplasmic side; that stretch reads MSEQEVTYTTLRFHKSSGLQNPVRPEETQRPRDVGHRECSVPWKF. Residues 46 to 66 traverse the membrane as a helical; Signal-anchor for type II membrane protein segment; it reads IVIVLGILCFLLLLTVAVLVI. At 67–288 the chain is on the extracellular side; the sequence is HIFRDGQEKH…SALQRDEDES (222 aa). 3 N-linked (GlcNAc...) asparagine glycosylation sites follow: asparagine 94, asparagine 105, and asparagine 114. In terms of domain architecture, C-type lectin spans 144–263; that stretch reads QVEGYWFCCG…THGCICEKRL (120 aa). Intrachain disulfides connect cysteine 151-cysteine 156, cysteine 169-cysteine 257, cysteine 173-cysteine 259, and cysteine 238-cysteine 251. Asparagine 177 carries N-linked (GlcNAc...) asparagine glycosylation.

In terms of assembly, homodimer; disulfide-linked.

The protein resides in the membrane. Its function is as follows. Receptor on natural killer (NK) cells for class I MHC. The polypeptide is Killer cell lectin-like receptor 2 (Klra2) (Mus musculus (Mouse)).